The following is a 317-amino-acid chain: Terpene synthase 3 (317 aa).

Positions 96–101 (DDFYFE) match the DDxx(x)D/E motif motif. Residues 223–231 (NDMVSFERE) carry the NDxxSxxxD/E motif motif.

This sequence belongs to the terpene synthase family.

In terms of biological role, terpene synthase that converts its substrate farnesyl diphosphate (FPP) into the sesquiterpene CAS 137235-51-9 as a major product. Is also able to convert FPP into 9-epi-(E)-caryophyllene, alpha-neoclovene, beta-neoclovene, and 3 yet unidentified sesquiterpenes. The protein is Terpene synthase 3 of Dictyostelium purpureum (Slime mold).